We begin with the raw amino-acid sequence, 103 residues long: uncharacterized protein (103 aa).

Disordered regions lie at residues 1–20 and 44–71; these read MIEL…WPKG and LERM…HHLG. The first 34 residues, 1–34, serve as a signal peptide directing secretion; it reads MIELSYAPDVAGRRSNWPKGSGVNTWTAIRWTFA.

This is an uncharacterized protein from Mycobacterium tuberculosis (strain CDC 1551 / Oshkosh).